The chain runs to 365 residues: MTAPDSTLDPKLKKLIRQDVQSMHAYAIQESSGMVKLDAMENPHRLPAGLQAELGQRLGALALNRYPDGRVNDLRRALADYAQMPEGFDIMLGNGSDELIALLALACDVPGGSVLAPLPGFVMYAMSAQLQGLKFIGVDLTPDFELDEAAMLAAIAEHKPSITYLAYPNNPTANLWDDAVIENIINAVGEQGGLVVIDEAYQPFASKSYAGRMARHSHVLLMRTLSKFGLAGVRLGYMMGPKALIAEIDKVRPPYNISVLNYECALFALEHREVFAAQAQDVVAQRAVLFNALSALPGVKAWHSDANMILIRVPDAARAFEGLRNRKVLIKNISKMHPLLANCLRLTVGTAEENAQLLAALEPSL.

The residue at position 227 (Lys-227) is an N6-(pyridoxal phosphate)lysine.

Belongs to the class-II pyridoxal-phosphate-dependent aminotransferase family. Histidinol-phosphate aminotransferase subfamily. As to quaternary structure, homodimer. Requires pyridoxal 5'-phosphate as cofactor.

It catalyses the reaction L-histidinol phosphate + 2-oxoglutarate = 3-(imidazol-4-yl)-2-oxopropyl phosphate + L-glutamate. It functions in the pathway amino-acid biosynthesis; L-histidine biosynthesis; L-histidine from 5-phospho-alpha-D-ribose 1-diphosphate: step 7/9. The protein is Histidinol-phosphate aminotransferase of Polaromonas naphthalenivorans (strain CJ2).